We begin with the raw amino-acid sequence, 563 residues long: NAD(P)H-quinone oxidoreductase chain 4 (563 aa).

The next 15 helical transmembrane spans lie at 25-45 (FPWL…VPFI), 56-76 (WFAL…YLYG), 90-110 (VSWL…ISMP), 111-131 (LILL…PVTF), 133-153 (PKLF…VFAV), 157-177 (LLFF…LAIW), 189-209 (FIIY…AMGF), 230-250 (GFQL…LPIV), 264-284 (TAPV…YALM), 298-318 (FAPL…LTSF), 335-355 (MGFV…GAML), 356-376 (QMIS…ATYD), 397-417 (FALW…SGFV), 438-458 (IVIA…LLSM), and 485-505 (VYII…PRLM).

This sequence belongs to the complex I subunit 4 family.

The protein localises to the cellular thylakoid membrane. It carries out the reaction a plastoquinone + NADH + (n+1) H(+)(in) = a plastoquinol + NAD(+) + n H(+)(out). The enzyme catalyses a plastoquinone + NADPH + (n+1) H(+)(in) = a plastoquinol + NADP(+) + n H(+)(out). In terms of biological role, NDH-1 shuttles electrons from NAD(P)H, via FMN and iron-sulfur (Fe-S) centers, to quinones in the respiratory chain. The immediate electron acceptor for the enzyme in this species is believed to be plastoquinone. Couples the redox reaction to proton translocation (for every two electrons transferred, four hydrogen ions are translocated across the cytoplasmic membrane), and thus conserves the redox energy in a proton gradient. The sequence is that of NAD(P)H-quinone oxidoreductase chain 4 from Prochlorococcus marinus (strain MIT 9313).